The chain runs to 329 residues: Glycerol-3-phosphate dehydrogenase [NAD(P)+] (329 aa).

Residues serine 10, tryptophan 11, arginine 31, and lysine 105 each contribute to the NADPH site. 3 residues coordinate sn-glycerol 3-phosphate: lysine 105, glycine 134, and serine 136. NADPH is bound at residue alanine 138. Sn-glycerol 3-phosphate-binding residues include lysine 189, aspartate 242, serine 252, arginine 253, and asparagine 254. Catalysis depends on lysine 189, which acts as the Proton acceptor. Arginine 253 contributes to the NADPH binding site. Residues valine 277 and glutamate 279 each coordinate NADPH.

This sequence belongs to the NAD-dependent glycerol-3-phosphate dehydrogenase family.

The protein localises to the cytoplasm. It catalyses the reaction sn-glycerol 3-phosphate + NAD(+) = dihydroxyacetone phosphate + NADH + H(+). The catalysed reaction is sn-glycerol 3-phosphate + NADP(+) = dihydroxyacetone phosphate + NADPH + H(+). The protein operates within membrane lipid metabolism; glycerophospholipid metabolism. Catalyzes the reduction of the glycolytic intermediate dihydroxyacetone phosphate (DHAP) to sn-glycerol 3-phosphate (G3P), the key precursor for phospholipid synthesis. The sequence is that of Glycerol-3-phosphate dehydrogenase [NAD(P)+] from Neisseria gonorrhoeae (strain ATCC 700825 / FA 1090).